The primary structure comprises 149 residues: Nucleoside diphosphate kinase (149 aa).

The ATP site is built by lysine 9, phenylalanine 57, arginine 85, threonine 91, arginine 102, and asparagine 112. The active-site Pros-phosphohistidine intermediate is the histidine 115.

This sequence belongs to the NDK family. The cofactor is Mg(2+).

Its subcellular location is the cytoplasm. It catalyses the reaction a 2'-deoxyribonucleoside 5'-diphosphate + ATP = a 2'-deoxyribonucleoside 5'-triphosphate + ADP. It carries out the reaction a ribonucleoside 5'-diphosphate + ATP = a ribonucleoside 5'-triphosphate + ADP. In terms of biological role, major role in the synthesis of nucleoside triphosphates other than ATP. The ATP gamma phosphate is transferred to the NDP beta phosphate via a ping-pong mechanism, using a phosphorylated active-site intermediate. This is Nucleoside diphosphate kinase from Methanosarcina mazei (strain ATCC BAA-159 / DSM 3647 / Goe1 / Go1 / JCM 11833 / OCM 88) (Methanosarcina frisia).